The sequence spans 503 residues: MSAWAALLLLWGLSLSPVTEQATFFDPRPSLWAEAGSPLAPWADVTLTCQSPLPTQEFQLLKDGVGQEPVHLESPAHEHRFPLGPVTSTTRGLYRCSYKGNNDWISPSNLVEVTGAEPLPAPSISTSPVSWITPGLNTTLLCLSGLRGVTFLLRLEGEDQFLEVAEAPEATQATFPVHRAGNYSCSYRTHAAGTPSEPSATVTIEELDPPPAPTLTVDRESAKVLRPGSSASLTCVAPLSGVDFQLRRGAEEQLVPRASTSPDRVFFRLSALAAGDGSGYTCRYRLRSELAAWSRDSAPAELVLSDGTLPAPELSAEPAILSPTPGALVQLRCRAPRAGVRFALVRKDAGGRQVQRVLSPAGPEAQFELRGVSAVDSGNYSCVYVDTSPPFAGSKPSATLELRVDGPLPRPQLRALWTGALTPGRDAVLRCEAEVPDVSFLLLRAGEEEPLAVAWSTHGPADLVLTSVGPQHAGTYSCRYRTGGPRSLLSELSDPVELRVAGS.

The first 21 residues, 1–21, serve as a signal peptide directing secretion; sequence MSAWAALLLLWGLSLSPVTEQ. Ig-like V-type domains are found at residues 27–115, 117–204, 208–305, 307–405, and 406–501; these read PRPS…EVTG, EPLP…TVTI, DPPP…LVLS, GTLP…LRVD, and GPLP…LRVA. An intrachain disulfide couples Cys49 to Cys96. Asn137 and Asn182 each carry an N-linked (GlcNAc...) asparagine glycan. Intrachain disulfides connect Cys142/Cys185, Cys235/Cys282, Cys333/Cys382, and Cys431/Cys478. Residue Asn379 is glycosylated (N-linked (GlcNAc...) asparagine).

Interacts with CRISP3. In terms of tissue distribution, plasma.

It localises to the secreted. The chain is Alpha-1B-glycoprotein from Bos taurus (Bovine).